Consider the following 92-residue polypeptide: Large ribosomal subunit protein bL27 (92 aa).

Positions 1 to 9 (MLVMNLQYF) are excised as a propeptide.

The protein belongs to the bacterial ribosomal protein bL27 family. The N-terminus is cleaved by ribosomal processing cysteine protease Prp.

This chain is Large ribosomal subunit protein bL27, found in Heliobacterium modesticaldum (strain ATCC 51547 / Ice1).